Here is a 371-residue protein sequence, read N- to C-terminus: MSIDDKVRAIVKEFKAYVPGKSKEEIARNYGIDPEKIIKLGSNENPWGCSPKIAEKLMDEVSKLHQYPQPINPELMDEISKFTKMPVENIIVGGDGADEVIDNIMRILIDEGDEVIIPIPTFTQYAISAKIHGANIKWAKFDEENEFKLDIESVLNNITEKTKAIFLCTPNNPTGNVIPTEDIKKIVESTDALVMIDHAYIEYSNEDYDLTDWALKYDNVLVLRTFSKVFGLAGQRVGYGVTSKKIVDYMMRIKPIFSLTRASQASAITALQDKEFFEKCLNEGIESREEIYNGLKKFKQLEVYPTEANYMLVKVKNGMNSSEFCEVLLKKGVIVRDCYSFEGLEPYYFRVSIGTFDENERFLKIMSEVVE.

The residue at position 228 (Lys228) is an N6-(pyridoxal phosphate)lysine.

The protein belongs to the class-II pyridoxal-phosphate-dependent aminotransferase family. Histidinol-phosphate aminotransferase subfamily. Pyridoxal 5'-phosphate serves as cofactor.

It carries out the reaction L-histidinol phosphate + 2-oxoglutarate = 3-(imidazol-4-yl)-2-oxopropyl phosphate + L-glutamate. Its pathway is amino-acid biosynthesis; L-histidine biosynthesis; L-histidine from 5-phospho-alpha-D-ribose 1-diphosphate: step 7/9. This Methanococcus maripaludis (strain C7 / ATCC BAA-1331) protein is Histidinol-phosphate aminotransferase.